The chain runs to 500 residues: Probable malate:quinone oxidoreductase (500 aa).

The protein belongs to the MQO family. The cofactor is FAD.

The enzyme catalyses (S)-malate + a quinone = a quinol + oxaloacetate. It participates in carbohydrate metabolism; tricarboxylic acid cycle; oxaloacetate from (S)-malate (quinone route): step 1/1. The chain is Probable malate:quinone oxidoreductase from Bacillus cereus (strain AH187).